We begin with the raw amino-acid sequence, 151 residues long: Large ribosomal subunit protein bL9 (151 aa).

The protein belongs to the bacterial ribosomal protein bL9 family.

In terms of biological role, binds to the 23S rRNA. This chain is Large ribosomal subunit protein bL9, found in Bordetella avium (strain 197N).